We begin with the raw amino-acid sequence, 241 residues long: Triosephosphate isomerase (241 aa).

Asparagine 9–lysine 11 is a substrate binding site. Histidine 88 serves as the catalytic Electrophile. The active-site Proton acceptor is glutamate 158. Residues glycine 164, serine 203, and glycine 224–glycine 225 contribute to the substrate site.

This sequence belongs to the triosephosphate isomerase family. Homodimer.

Its subcellular location is the cytoplasm. It carries out the reaction D-glyceraldehyde 3-phosphate = dihydroxyacetone phosphate. Its pathway is carbohydrate biosynthesis; gluconeogenesis. The protein operates within carbohydrate degradation; glycolysis; D-glyceraldehyde 3-phosphate from glycerone phosphate: step 1/1. Involved in the gluconeogenesis. Catalyzes stereospecifically the conversion of dihydroxyacetone phosphate (DHAP) to D-glyceraldehyde-3-phosphate (G3P). The protein is Triosephosphate isomerase of Dichelobacter nodosus (strain VCS1703A).